Here is a 337-residue protein sequence, read N- to C-terminus: 3-isopropylmalate dehydrogenase (337 aa).

4 residues coordinate substrate: Arg-86, Arg-96, Arg-117, and Asp-201. 3 residues coordinate Mg(2+): Asp-201, Asp-225, and Asp-229. Residue 258–270 (GAAFDIAGKNIGN) coordinates NAD(+).

Belongs to the isocitrate and isopropylmalate dehydrogenases family. In terms of assembly, homotetramer. Requires Mg(2+) as cofactor. The cofactor is Mn(2+).

It localises to the cytoplasm. The enzyme catalyses (2R,3S)-3-isopropylmalate + NAD(+) = 4-methyl-2-oxopentanoate + CO2 + NADH. It functions in the pathway amino-acid biosynthesis; L-leucine biosynthesis; L-leucine from 3-methyl-2-oxobutanoate: step 3/4. Its function is as follows. Catalyzes the oxidation of 3-carboxy-2-hydroxy-4-methylpentanoate (3-isopropylmalate) to 3-carboxy-4-methyl-2-oxopentanoate. The product decarboxylates to 4-methyl-2 oxopentanoate. This chain is 3-isopropylmalate dehydrogenase (leuB), found in Sulfurisphaera tokodaii (strain DSM 16993 / JCM 10545 / NBRC 100140 / 7) (Sulfolobus tokodaii).